The primary structure comprises 96 residues: Guanyl-specific ribonuclease Sa (96 aa).

A disulfide bond links Cys7 and Cys96. Glu54 serves as the catalytic Proton acceptor. His85 (proton donor) is an active-site residue.

The protein belongs to the ribonuclease N1/T1 family.

Its subcellular location is the secreted. The enzyme catalyses [RNA] containing guanosine + H2O = an [RNA fragment]-3'-guanosine-3'-phosphate + a 5'-hydroxy-ribonucleotide-3'-[RNA fragment].. In Kitasatospora aureofaciens (Streptomyces aureofaciens), this protein is Guanyl-specific ribonuclease Sa (rnaSA).